The primary structure comprises 459 residues: Putrescine aminotransferase (459 aa).

Pyridoxal 5'-phosphate-binding positions include 150-151 (GT) and Q274. K300 is modified (N6-(pyridoxal phosphate)lysine). Pyridoxal 5'-phosphate is bound at residue T332.

It belongs to the class-III pyridoxal-phosphate-dependent aminotransferase family. Putrescine aminotransferase subfamily. Pyridoxal 5'-phosphate serves as cofactor.

It carries out the reaction an alkane-alpha,omega-diamine + 2-oxoglutarate = an omega-aminoaldehyde + L-glutamate. It catalyses the reaction putrescine + 2-oxoglutarate = 1-pyrroline + L-glutamate + H2O. The catalysed reaction is cadaverine + 2-oxoglutarate = 5-aminopentanal + L-glutamate. Its pathway is amine and polyamine degradation; putrescine degradation; 4-aminobutanal from putrescine (transaminase route): step 1/1. Catalyzes the aminotransferase reaction from putrescine to 2-oxoglutarate, leading to glutamate and 4-aminobutanal, which spontaneously cyclizes to form 1-pyrroline. This is the first step in one of two pathways for putrescine degradation, where putrescine is converted into 4-aminobutanoate (gamma-aminobutyrate or GABA) via 4-aminobutanal. Also functions as a cadaverine transaminase in a a L-lysine degradation pathway to succinate that proceeds via cadaverine, glutarate and L-2-hydroxyglutarate. The polypeptide is Putrescine aminotransferase (Escherichia coli O17:K52:H18 (strain UMN026 / ExPEC)).